A 122-amino-acid polypeptide reads, in one-letter code: UPF0102 protein Smed_3545 (122 aa).

It belongs to the UPF0102 family.

In Sinorhizobium medicae (strain WSM419) (Ensifer medicae), this protein is UPF0102 protein Smed_3545.